The chain runs to 201 residues: Large ribosomal subunit protein bL25 (201 aa).

Belongs to the bacterial ribosomal protein bL25 family. CTC subfamily. Part of the 50S ribosomal subunit; part of the 5S rRNA/L5/L18/L25 subcomplex. Contacts the 5S rRNA. Binds to the 5S rRNA independently of L5 and L18.

In terms of biological role, this is one of the proteins that binds to the 5S RNA in the ribosome where it forms part of the central protuberance. This is Large ribosomal subunit protein bL25 from Burkholderia multivorans (strain ATCC 17616 / 249).